The following is a 181-amino-acid chain: Probable pyruvoyl-dependent arginine decarboxylase (181 aa).

S43 is modified (pyruvic acid (Ser)).

This sequence belongs to the PdaD family. Pyruvate serves as cofactor.

It carries out the reaction L-arginine + H(+) = agmatine + CO2. The sequence is that of Probable pyruvoyl-dependent arginine decarboxylase from Chlorobaculum tepidum (strain ATCC 49652 / DSM 12025 / NBRC 103806 / TLS) (Chlorobium tepidum).